Consider the following 288-residue polypeptide: ATP synthase gamma chain (288 aa).

This sequence belongs to the ATPase gamma chain family. F-type ATPases have 2 components, CF(1) - the catalytic core - and CF(0) - the membrane proton channel. CF(1) has five subunits: alpha(3), beta(3), gamma(1), delta(1), epsilon(1). CF(0) has three main subunits: a, b and c.

Its subcellular location is the cell inner membrane. In terms of biological role, produces ATP from ADP in the presence of a proton gradient across the membrane. The gamma chain is believed to be important in regulating ATPase activity and the flow of protons through the CF(0) complex. The sequence is that of ATP synthase gamma chain from Stutzerimonas stutzeri (strain A1501) (Pseudomonas stutzeri).